Here is a 743-residue protein sequence, read N- to C-terminus: 1,4-alpha-glucan branching enzyme GlgB (743 aa).

Aspartate 416 (nucleophile) is an active-site residue. The active-site Proton donor is glutamate 469.

Belongs to the glycosyl hydrolase 13 family. GlgB subfamily. Monomer.

It carries out the reaction Transfers a segment of a (1-&gt;4)-alpha-D-glucan chain to a primary hydroxy group in a similar glucan chain.. The protein operates within glycan biosynthesis; glycogen biosynthesis. Functionally, catalyzes the formation of the alpha-1,6-glucosidic linkages in glycogen by scission of a 1,4-alpha-linked oligosaccharide from growing alpha-1,4-glucan chains and the subsequent attachment of the oligosaccharide to the alpha-1,6 position. The chain is 1,4-alpha-glucan branching enzyme GlgB from Shewanella baltica (strain OS185).